We begin with the raw amino-acid sequence, 918 residues long: DNA repair and recombination protein RAD54B (918 aa).

A compositionally biased stretch (polar residues) spans 1–11; that stretch reads MRRSAAPSQVL. The disordered stretch occupies residues 1–29; that stretch reads MRRSAAPSQVLGNVAKKPRFIPPGKSNAL. The Helicase ATP-binding domain maps to 320 to 487; it reads GMRVSGRFGA…YALIEFVNPG (168 aa). 333–340 contacts ATP; it reads DEMGLGKT. A DEGH box motif is present at residues 438–441; it reads DEGH. Residues 653–817 form the Helicase C-terminal domain; the sequence is VLVKLLAAIR…HIHFSVEELR (165 aa). A disordered region spans residues 842-873; sequence KDHQNPSSKKPSVSRCCQLRQDQGKHNSKKPL.

It belongs to the SNF2/RAD54 helicase family.

It localises to the nucleus. Functionally, involved in DNA repair and mitotic recombination. This is DNA repair and recombination protein RAD54B (RAD54B) from Gallus gallus (Chicken).